Here is a 245-residue protein sequence, read N- to C-terminus: tRNA (guanine-N(1)-)-methyltransferase (245 aa).

S-adenosyl-L-methionine is bound by residues glycine 111 and 131 to 136; that span reads MGDYVL.

This sequence belongs to the RNA methyltransferase TrmD family. Homodimer.

The protein localises to the cytoplasm. The enzyme catalyses guanosine(37) in tRNA + S-adenosyl-L-methionine = N(1)-methylguanosine(37) in tRNA + S-adenosyl-L-homocysteine + H(+). Its function is as follows. Specifically methylates guanosine-37 in various tRNAs. This Staphylococcus aureus (strain MRSA252) protein is tRNA (guanine-N(1)-)-methyltransferase.